Consider the following 248-residue polypeptide: Triosephosphate isomerase (248 aa).

Substrate contacts are provided by N11 and K13. H95 (electrophile) is an active-site residue. E165 functions as the Proton acceptor in the catalytic mechanism.

The protein belongs to the triosephosphate isomerase family. As to quaternary structure, homodimer.

Its subcellular location is the cytoplasm. It catalyses the reaction dihydroxyacetone phosphate = methylglyoxal + phosphate. It carries out the reaction D-glyceraldehyde 3-phosphate = dihydroxyacetone phosphate. It functions in the pathway carbohydrate degradation; glycolysis; D-glyceraldehyde 3-phosphate from glycerone phosphate: step 1/1. Its pathway is carbohydrate biosynthesis; gluconeogenesis. Functionally, triosephosphate isomerase is an extremely efficient metabolic enzyme that catalyzes the interconversion between dihydroxyacetone phosphate (DHAP) and D-glyceraldehyde-3-phosphate (G3P) in glycolysis and gluconeogenesis. Its function is as follows. It is also responsible for the non-negligible production of methylglyoxal a reactive cytotoxic side-product that modifies and can alter proteins, DNA and lipids. The protein is Triosephosphate isomerase (TPI1) of Gallus gallus (Chicken).